Reading from the N-terminus, the 91-residue chain is Large ribosomal subunit protein eL31 (91 aa).

This sequence belongs to the eukaryotic ribosomal protein eL31 family.

The protein is Large ribosomal subunit protein eL31 of Pyrobaculum neutrophilum (strain DSM 2338 / JCM 9278 / NBRC 100436 / V24Sta) (Thermoproteus neutrophilus).